The primary structure comprises 84 residues: Small ribosomal subunit protein uS17 (84 aa).

This sequence belongs to the universal ribosomal protein uS17 family. In terms of assembly, part of the 30S ribosomal subunit.

Its function is as follows. One of the primary rRNA binding proteins, it binds specifically to the 5'-end of 16S ribosomal RNA. The polypeptide is Small ribosomal subunit protein uS17 (Caldanaerobacter subterraneus subsp. tengcongensis (strain DSM 15242 / JCM 11007 / NBRC 100824 / MB4) (Thermoanaerobacter tengcongensis)).